Consider the following 72-residue polypeptide: Translation initiation factor IF-1 (72 aa).

Residues 1-72 (MAKADVIEVE…TKGRITFRFK (72 aa)) enclose the S1-like domain.

It belongs to the IF-1 family. Component of the 30S ribosomal translation pre-initiation complex which assembles on the 30S ribosome in the order IF-2 and IF-3, IF-1 and N-formylmethionyl-tRNA(fMet); mRNA recruitment can occur at any time during PIC assembly.

The protein resides in the cytoplasm. Its function is as follows. One of the essential components for the initiation of protein synthesis. Stabilizes the binding of IF-2 and IF-3 on the 30S subunit to which N-formylmethionyl-tRNA(fMet) subsequently binds. Helps modulate mRNA selection, yielding the 30S pre-initiation complex (PIC). Upon addition of the 50S ribosomal subunit IF-1, IF-2 and IF-3 are released leaving the mature 70S translation initiation complex. In Limosilactobacillus reuteri (strain DSM 20016) (Lactobacillus reuteri), this protein is Translation initiation factor IF-1.